A 214-amino-acid polypeptide reads, in one-letter code: MNDLSNYRKSYEKSELLETNIPEDPINLFNRWFHEVEDFGGSGEVNAMTVSTIGLDGFPKSRVVLLKKFSEEGFIFYTNYNSEKGKAIEANPNVCLSFFWQEAERQVIIKGIAQKTSEIISDNYFDSRPDGSKLGAIVSHQSEVIPSRTFLEENLKKLEAEFEGKPIPRPENWGGYLVTPLQVEFWQGRPNRLHDRIRYTSQSDFSWTIERLSS.

Residues 8 to 11 (RKSY) and K67 contribute to the substrate site. FMN contacts are provided by residues 62-67 (RVVLLK), 77-78 (YT), K84, and Q106. Residues Y124, R128, and S132 each coordinate substrate. FMN contacts are provided by residues 141 to 142 (QS) and W186. 192–194 (RLH) contributes to the substrate binding site. R196 lines the FMN pocket.

Belongs to the pyridoxamine 5'-phosphate oxidase family. Homodimer. FMN serves as cofactor.

It catalyses the reaction pyridoxamine 5'-phosphate + O2 + H2O = pyridoxal 5'-phosphate + H2O2 + NH4(+). It carries out the reaction pyridoxine 5'-phosphate + O2 = pyridoxal 5'-phosphate + H2O2. It functions in the pathway cofactor metabolism; pyridoxal 5'-phosphate salvage; pyridoxal 5'-phosphate from pyridoxamine 5'-phosphate: step 1/1. The protein operates within cofactor metabolism; pyridoxal 5'-phosphate salvage; pyridoxal 5'-phosphate from pyridoxine 5'-phosphate: step 1/1. Catalyzes the oxidation of either pyridoxine 5'-phosphate (PNP) or pyridoxamine 5'-phosphate (PMP) into pyridoxal 5'-phosphate (PLP). This Flavobacterium johnsoniae (strain ATCC 17061 / DSM 2064 / JCM 8514 / BCRC 14874 / CCUG 350202 / NBRC 14942 / NCIMB 11054 / UW101) (Cytophaga johnsonae) protein is Pyridoxine/pyridoxamine 5'-phosphate oxidase.